A 390-amino-acid polypeptide reads, in one-letter code: Methylthioribose-1-phosphate isomerase (390 aa).

The active-site Proton donor is aspartate 263.

This sequence belongs to the eIF-2B alpha/beta/delta subunits family. MtnA subfamily.

It localises to the cytoplasm. The protein localises to the nucleus. The catalysed reaction is 5-(methylsulfanyl)-alpha-D-ribose 1-phosphate = 5-(methylsulfanyl)-D-ribulose 1-phosphate. Its pathway is amino-acid biosynthesis; L-methionine biosynthesis via salvage pathway; L-methionine from S-methyl-5-thio-alpha-D-ribose 1-phosphate: step 1/6. In terms of biological role, catalyzes the interconversion of methylthioribose-1-phosphate (MTR-1-P) into methylthioribulose-1-phosphate (MTRu-1-P). In Meyerozyma guilliermondii (strain ATCC 6260 / CBS 566 / DSM 6381 / JCM 1539 / NBRC 10279 / NRRL Y-324) (Yeast), this protein is Methylthioribose-1-phosphate isomerase.